The following is a 375-amino-acid chain: Thiamine-phosphate synthase (375 aa).

Residues 1-127 (MTNAESRTVL…AACIESIRYQ (127 aa)) form a unknown region. Positions 128–375 (CYATFRELEL…SSDVCPLPND (248 aa)) are thiamine-phosphate synthase. Residues 183–185 (QLR) and N215 each bind 4-amino-2-methyl-5-(diphosphooxymethyl)pyrimidine. Positions 216 and 235 each coordinate Mg(2+). 4-amino-2-methyl-5-(diphosphooxymethyl)pyrimidine is bound by residues S254 and K283. G315 lines the 2-[(2R,5Z)-2-carboxy-4-methylthiazol-5(2H)-ylidene]ethyl phosphate pocket.

Belongs to the thiamine-phosphate synthase family. Mg(2+) is required as a cofactor.

The catalysed reaction is 2-[(2R,5Z)-2-carboxy-4-methylthiazol-5(2H)-ylidene]ethyl phosphate + 4-amino-2-methyl-5-(diphosphooxymethyl)pyrimidine + 2 H(+) = thiamine phosphate + CO2 + diphosphate. It carries out the reaction 2-(2-carboxy-4-methylthiazol-5-yl)ethyl phosphate + 4-amino-2-methyl-5-(diphosphooxymethyl)pyrimidine + 2 H(+) = thiamine phosphate + CO2 + diphosphate. The enzyme catalyses 4-methyl-5-(2-phosphooxyethyl)-thiazole + 4-amino-2-methyl-5-(diphosphooxymethyl)pyrimidine + H(+) = thiamine phosphate + diphosphate. Its pathway is cofactor biosynthesis; thiamine diphosphate biosynthesis; thiamine phosphate from 4-amino-2-methyl-5-diphosphomethylpyrimidine and 4-methyl-5-(2-phosphoethyl)-thiazole: step 1/1. Its function is as follows. Condenses 4-methyl-5-(beta-hydroxyethyl)thiazole monophosphate (THZ-P) and 2-methyl-4-amino-5-hydroxymethyl pyrimidine pyrophosphate (HMP-PP) to form thiamine monophosphate (TMP). The protein is Thiamine-phosphate synthase (thiE) of Rhodopirellula baltica (strain DSM 10527 / NCIMB 13988 / SH1).